A 101-amino-acid chain; its full sequence is MNNNVEELLRRIPLYNKYGKDFPQETVTRFQMPEFKLPALQPTRDLLCPWYEECDNITKVCQLHDSSNKKFDQWYKEQYLSKKPPGIVGNTLLSPSRKDNS.

The residue at position 1 (Met1) is an N-acetylmethionine. A Phosphoserine modification is found at Ser94.

Component of the ESCRT-I complex (endosomal sorting complex required for transport I) which consists of STP22, VPS28, SRN2 and MVB12 in a 1:1:1:1 stoichiometry. Interacts with STP22 and SRN2.

The protein localises to the cytoplasm. It is found in the endosome. Its subcellular location is the late endosome membrane. In terms of biological role, component of the ESCRT-I complex, a regulator of vesicular trafficking process. Binds to ubiquitinated cargo proteins and is required for the sorting of endocytic ubiquitinated cargos into multivesicular bodies (MVBs). Appears to be involved in cargo sorting and release of the ESCRT-I complex from the MVBs. In Saccharomyces cerevisiae (strain ATCC 204508 / S288c) (Baker's yeast), this protein is Multivesicular body sorting factor 12 (MVB12).